A 101-amino-acid polypeptide reads, in one-letter code: Small ribosomal subunit protein uS10 (101 aa).

It belongs to the universal ribosomal protein uS10 family. As to quaternary structure, part of the 30S ribosomal subunit.

In terms of biological role, involved in the binding of tRNA to the ribosomes. This is Small ribosomal subunit protein uS10 from Porphyromonas gingivalis (strain ATCC 33277 / DSM 20709 / CIP 103683 / JCM 12257 / NCTC 11834 / 2561).